A 529-amino-acid chain; its full sequence is Bifunctional purine biosynthesis protein PurH (529 aa).

One can recognise an MGS-like domain in the interval 1–148; the sequence is MQQRRPVRRA…KNHKDVAIVV (148 aa). Lys287 bears the N6-acetyllysine mark.

It belongs to the PurH family.

It catalyses the reaction (6R)-10-formyltetrahydrofolate + 5-amino-1-(5-phospho-beta-D-ribosyl)imidazole-4-carboxamide = 5-formamido-1-(5-phospho-D-ribosyl)imidazole-4-carboxamide + (6S)-5,6,7,8-tetrahydrofolate. It carries out the reaction IMP + H2O = 5-formamido-1-(5-phospho-D-ribosyl)imidazole-4-carboxamide. The protein operates within purine metabolism; IMP biosynthesis via de novo pathway; 5-formamido-1-(5-phospho-D-ribosyl)imidazole-4-carboxamide from 5-amino-1-(5-phospho-D-ribosyl)imidazole-4-carboxamide (10-formyl THF route): step 1/1. It participates in purine metabolism; IMP biosynthesis via de novo pathway; IMP from 5-formamido-1-(5-phospho-D-ribosyl)imidazole-4-carboxamide: step 1/1. The chain is Bifunctional purine biosynthesis protein PurH from Escherichia coli O7:K1 (strain IAI39 / ExPEC).